A 160-amino-acid polypeptide reads, in one-letter code: Transcriptional repressor NrdR (160 aa).

Polar residues predominate over residues 1–11; it reads MRCPNCNSLDT. The interval 1–20 is disordered; sequence MRCPNCNSLDTQVKDSRPTE. Residues 3–34 fold into a zinc finger; the sequence is CPNCNSLDTQVKDSRPTEDSSVIRRRRVCIAC. The ATP-cone domain maps to 49–139; it reads LTVIKRNGRR…VYRNFREAKD (91 aa).

It belongs to the NrdR family. Zn(2+) serves as cofactor.

Negatively regulates transcription of bacterial ribonucleotide reductase nrd genes and operons by binding to NrdR-boxes. In Rhodopseudomonas palustris (strain BisB5), this protein is Transcriptional repressor NrdR.